The primary structure comprises 188 residues: Ribosome-recycling factor (188 aa).

The protein belongs to the RRF family.

It localises to the cytoplasm. Its function is as follows. Responsible for the release of ribosomes from messenger RNA at the termination of protein biosynthesis. May increase the efficiency of translation by recycling ribosomes from one round of translation to another. In Cereibacter sphaeroides (strain ATCC 17029 / ATH 2.4.9) (Rhodobacter sphaeroides), this protein is Ribosome-recycling factor.